We begin with the raw amino-acid sequence, 527 residues long: NADH-ubiquinone oxidoreductase chain 5 (527 aa).

A run of 14 helical transmembrane segments spans residues 3–23 (ISIF…WLMP), 43–63 (FYFN…SVLV), 75–95 (FNYY…LNFS), 98–118 (IFTM…LVLF), 141–161 (FMFV…SFSM), 168–188 (LLLL…SWLP), 197–217 (VSSL…LMNF), 226–246 (FISF…LASL), 263–283 (MGFS…IHLV), 318–338 (LPNF…GLIF), 357–377 (YMMF…GYSF), 398–418 (VFMN…LWWM), 432–452 (VDFF…FLIL), and 507–527 (YLKS…FMIC).

The protein belongs to the complex I subunit 5 family.

The protein localises to the mitochondrion inner membrane. It carries out the reaction a ubiquinone + NADH + 5 H(+)(in) = a ubiquinol + NAD(+) + 4 H(+)(out). Its function is as follows. Core subunit of the mitochondrial membrane respiratory chain NADH dehydrogenase (Complex I) that is believed to belong to the minimal assembly required for catalysis. Complex I functions in the transfer of electrons from NADH to the respiratory chain. The immediate electron acceptor for the enzyme is believed to be ubiquinone. This is NADH-ubiquinone oxidoreductase chain 5 from Caenorhabditis elegans.